A 262-amino-acid chain; its full sequence is DNA-directed RNA polymerase subunit Rpo3 (262 aa).

The protein belongs to the archaeal Rpo3/eukaryotic RPB3 RNA polymerase subunit family. In terms of assembly, part of the RNA polymerase complex.

The protein resides in the cytoplasm. The catalysed reaction is RNA(n) + a ribonucleoside 5'-triphosphate = RNA(n+1) + diphosphate. In terms of biological role, DNA-dependent RNA polymerase (RNAP) catalyzes the transcription of DNA into RNA using the four ribonucleoside triphosphates as substrates. This chain is DNA-directed RNA polymerase subunit Rpo3, found in Pyrobaculum neutrophilum (strain DSM 2338 / JCM 9278 / NBRC 100436 / V24Sta) (Thermoproteus neutrophilus).